We begin with the raw amino-acid sequence, 273 residues long: Putative phosphoenolpyruvate synthase regulatory protein (273 aa).

153 to 160 is an ADP binding site; that stretch reads AVSRAGKT.

The protein belongs to the pyruvate, phosphate/water dikinase regulatory protein family. PSRP subfamily.

It carries out the reaction [pyruvate, water dikinase] + ADP = [pyruvate, water dikinase]-phosphate + AMP + H(+). The catalysed reaction is [pyruvate, water dikinase]-phosphate + phosphate + H(+) = [pyruvate, water dikinase] + diphosphate. Its function is as follows. Bifunctional serine/threonine kinase and phosphorylase involved in the regulation of the phosphoenolpyruvate synthase (PEPS) by catalyzing its phosphorylation/dephosphorylation. This chain is Putative phosphoenolpyruvate synthase regulatory protein, found in Stenotrophomonas maltophilia (strain R551-3).